The chain runs to 134 residues: Isocitrate dehydrogenase [NAD] subunit alpha, mitochondrial (134 aa).

Lysine 37 is subject to N6-succinyllysine. The residue at position 50 (threonine 50) is a Phosphothreonine. Substrate-binding residues include arginine 64, arginine 74, and arginine 95.

It belongs to the isocitrate and isopropylmalate dehydrogenases family. Heterooligomer of subunits alpha (IDH3A), beta (IDH3B), and gamma (IDH3G) in the apparent ratio of 2:1:1. The heterodimer containing one IDH3A and one IDH3B subunit and the heterodimer containing one IDH3A and one IDH3G subunit assemble into a heterotetramer (which contains two subunits of IDH3A, one of IDH3B and one of IDH3G) and further into the heterooctamer. Requires Mg(2+) as cofactor. The cofactor is Mn(2+).

It localises to the mitochondrion. The enzyme catalyses D-threo-isocitrate + NAD(+) = 2-oxoglutarate + CO2 + NADH. With respect to regulation, the heterotetramer and the heterodimer composed of IDH3A and IDH3G subunits can be allosterically activated by citrate (CIT) or/and ADP, and the two activators can act independently or synergistically. The heterodimer composed of IDH3A and IDH3B subunits cannot be allosterically regulated and the allosteric regulation of the heterotetramer is through the IDH3G subunit and not the IDH3B subunit. The IDH3G subunit contains the allosteric site which consists of a CIT-binding site and an ADP-binding site, and the binding of CIT and ADP causes conformational changes at the allosteric site which are transmitted to the active site in the catalytic subunit (IDH3A) through a cascade of conformational changes at the heterodimer interface, leading to stabilization of the isocitrate-binding at the active site and thus activation of the enzyme. ATP can activate the heterotetramer and the heterodimer composed of IDH3A and IDH3G subunits at low concentrations but inhibits their activities at high concentrations, whereas ATP exhibits only inhibitory effect on the heterodimer composed of IDH3A and IDH3B subunits. In terms of biological role, catalytic subunit of the enzyme which catalyzes the decarboxylation of isocitrate (ICT) into alpha-ketoglutarate. The heterodimer composed of the alpha (IDH3A) and beta (IDH3B) subunits and the heterodimer composed of the alpha (IDH3A) and gamma (IDH3G) subunits, have considerable basal activity but the full activity of the heterotetramer (containing two subunits of IDH3A, one of IDH3B and one of IDH3G) requires the assembly and cooperative function of both heterodimers. This Mesocricetus auratus (Golden hamster) protein is Isocitrate dehydrogenase [NAD] subunit alpha, mitochondrial.